Consider the following 296-residue polypeptide: Glutamate 5-kinase (296 aa).

Lys15 contributes to the ATP binding site. Substrate is bound by residues Ser55, Asp159, and Asn186. ATP is bound by residues Ser206–Asp207 and Thr248–Lys254.

The protein belongs to the glutamate 5-kinase family.

It is found in the cytoplasm. The catalysed reaction is L-glutamate + ATP = L-glutamyl 5-phosphate + ADP. Its pathway is amino-acid biosynthesis; L-proline biosynthesis; L-glutamate 5-semialdehyde from L-glutamate: step 1/2. In terms of biological role, catalyzes the transfer of a phosphate group to glutamate to form L-glutamate 5-phosphate. The protein is Glutamate 5-kinase of Treponema pallidum (strain Nichols).